The sequence spans 385 residues: Cytochrome b (385 aa).

Helical transmembrane passes span 32–52, 76–98, 113–133, and 179–199; these read MGSLLGLCLVIQILTGIFMAM, WLLRYTHANGASFFFAVMYMHMA, VWIIGVIIFVATMAAAFLGYC, and FFALHYLVPFIIAALVVMHFM. 2 residues coordinate heme b: His82 and His96. Heme b is bound by residues His183 and His197. His202 is an a ubiquinone binding site. The next 4 membrane-spanning stretches (helical) occupy residues 225-245, 289-309, 321-341, and 348-368; these read FIFKDLITVFVFLIIFSLFVF, LLGVITMFGAILVLLVLPLTD, ISKLFFFLFVFNFILLGVLGS, and FVQMGQYATFLYFAYFLIFVP.

The protein belongs to the cytochrome b family. As to quaternary structure, fungal cytochrome b-c1 complex contains 10 subunits; 3 respiratory subunits, 2 core proteins and 5 low-molecular weight proteins. Cytochrome b-c1 complex is a homodimer. The cofactor is heme b.

The protein resides in the mitochondrion inner membrane. Component of the ubiquinol-cytochrome c reductase complex (complex III or cytochrome b-c1 complex) that is part of the mitochondrial respiratory chain. The b-c1 complex mediates electron transfer from ubiquinol to cytochrome c. Contributes to the generation of a proton gradient across the mitochondrial membrane that is then used for ATP synthesis. This is Cytochrome b (COB) from Monosporozyma servazzii (Yeast).